Reading from the N-terminus, the 474-residue chain is ATP synthase subunit beta 2 (474 aa).

Position 153–160 (153–160 (GGAGVGKT)) interacts with ATP.

It belongs to the ATPase alpha/beta chains family. As to quaternary structure, F-type ATPases have 2 components, CF(1) - the catalytic core - and CF(0) - the membrane proton channel. CF(1) has five subunits: alpha(3), beta(3), gamma(1), delta(1), epsilon(1). CF(0) has three main subunits: a(1), b(2) and c(9-12). The alpha and beta chains form an alternating ring which encloses part of the gamma chain. CF(1) is attached to CF(0) by a central stalk formed by the gamma and epsilon chains, while a peripheral stalk is formed by the delta and b chains.

Its subcellular location is the cell inner membrane. The enzyme catalyses ATP + H2O + 4 H(+)(in) = ADP + phosphate + 5 H(+)(out). Functionally, produces ATP from ADP in the presence of a proton gradient across the membrane. The catalytic sites are hosted primarily by the beta subunits. This chain is ATP synthase subunit beta 2, found in Syntrophotalea carbinolica (strain DSM 2380 / NBRC 103641 / GraBd1) (Pelobacter carbinolicus).